Reading from the N-terminus, the 104-residue chain is L-rhamnose mutarotase (104 aa).

Y18 is a binding site for substrate. The Proton donor role is filled by H22. Substrate contacts are provided by residues Y41 and 76 to 77 (WW).

This sequence belongs to the rhamnose mutarotase family. As to quaternary structure, homodimer.

The protein resides in the cytoplasm. The catalysed reaction is alpha-L-rhamnose = beta-L-rhamnose. It functions in the pathway carbohydrate metabolism; L-rhamnose metabolism. Its function is as follows. Involved in the anomeric conversion of L-rhamnose. This is L-rhamnose mutarotase from Klebsiella pneumoniae (strain 342).